A 447-amino-acid polypeptide reads, in one-letter code: BAG family molecular chaperone regulator 5 (447 aa).

5 consecutive BAG domains span residues 9–86 (SISR…EQNA), 95–167 (QNIF…EDCM), 182–260 (SVAK…DLEE), 275–350 (SILK…DLKE), and 365–442 (SHKA…DLKS).

Binds to the ATPase domain of HSP/HSP70 chaperones. Binds PRKN. Interacts with HSPA8 and JPH2. In terms of tissue distribution, expressed in the heart.

Functionally, co-chaperone for HSP/HSP70 proteins. It functions as a nucleotide-exchange factor promoting the release of ADP from HSP70, thereby activating HSP70-mediated protein refolding. Has an essential role in maintaining proteostasis at junctional membrane complexes (JMC), where it may function as a scaffold between the HSPA8 chaperone and JMC proteins enabling correct, HSPA8-dependent JMC protein folding. Inhibits both auto-ubiquitination of PRKN and ubiquitination of target proteins by PRKN. The chain is BAG family molecular chaperone regulator 5 (BAG5) from Homo sapiens (Human).